A 234-amino-acid polypeptide reads, in one-letter code: Redox-sensing transcriptional repressor Rex (234 aa).

A DNA-binding region (H-T-H motif) is located at residues 17–56 (TYIRVLEELEAQNVLRASSGELARRAGVTPFQVRKDLTYF). 91–96 (GMGRLG) provides a ligand contact to NAD(+).

The protein belongs to the transcriptional regulatory Rex family. As to quaternary structure, homodimer.

It localises to the cytoplasm. Modulates transcription in response to changes in cellular NADH/NAD(+) redox state. The chain is Redox-sensing transcriptional repressor Rex from Deinococcus radiodurans (strain ATCC 13939 / DSM 20539 / JCM 16871 / CCUG 27074 / LMG 4051 / NBRC 15346 / NCIMB 9279 / VKM B-1422 / R1).